The primary structure comprises 252 residues: Uridylate kinase (252 aa).

Position 20–23 (20–23) interacts with ATP; the sequence is KLSG. The segment at 28–33 is involved in allosteric activation by GTP; it reads GGGGLG. Gly-62 is a binding site for UMP. ATP contacts are provided by Gly-63 and Arg-67. UMP is bound by residues Asp-82 and 143–150; that span reads MGMPYFST. ATP is bound by residues Asn-171, Tyr-177, and Asp-180.

This sequence belongs to the UMP kinase family. As to quaternary structure, homohexamer.

Its subcellular location is the cytoplasm. It carries out the reaction UMP + ATP = UDP + ADP. Its pathway is pyrimidine metabolism; CTP biosynthesis via de novo pathway; UDP from UMP (UMPK route): step 1/1. With respect to regulation, allosterically activated by GTP. Inhibited by UTP. Functionally, catalyzes the reversible phosphorylation of UMP to UDP. The chain is Uridylate kinase from Streptomyces avermitilis (strain ATCC 31267 / DSM 46492 / JCM 5070 / NBRC 14893 / NCIMB 12804 / NRRL 8165 / MA-4680).